Consider the following 92-residue polypeptide: Small ribosomal subunit protein uS19 (92 aa).

It belongs to the universal ribosomal protein uS19 family.

Functionally, protein S19 forms a complex with S13 that binds strongly to the 16S ribosomal RNA. The chain is Small ribosomal subunit protein uS19 from Granulibacter bethesdensis (strain ATCC BAA-1260 / CGDNIH1).